The following is a 205-amino-acid chain: Holliday junction branch migration complex subunit RuvA (205 aa).

Residues 1–64 are domain I; that stretch reads MIGRLRGIIL…EDAQLLFGFN (64 aa). The domain II stretch occupies residues 65-143; the sequence is DKQERALFRE…GLSGDLFNSV (79 aa). Residues 144-156 form a flexible linker region; that stretch reads SDIPLTSPANVDN. Positions 157–205 are domain III; the sequence is RVGEPEAEAAAALVALGYKPQEASRMISKIARPDADCETLIRDALRAAL.

Belongs to the RuvA family. In terms of assembly, homotetramer. Forms an RuvA(8)-RuvB(12)-Holliday junction (HJ) complex. HJ DNA is sandwiched between 2 RuvA tetramers; dsDNA enters through RuvA and exits via RuvB. An RuvB hexamer assembles on each DNA strand where it exits the tetramer. Each RuvB hexamer is contacted by two RuvA subunits (via domain III) on 2 adjacent RuvB subunits; this complex drives branch migration. In the full resolvosome a probable DNA-RuvA(4)-RuvB(12)-RuvC(2) complex forms which resolves the HJ.

Its subcellular location is the cytoplasm. The RuvA-RuvB-RuvC complex processes Holliday junction (HJ) DNA during genetic recombination and DNA repair, while the RuvA-RuvB complex plays an important role in the rescue of blocked DNA replication forks via replication fork reversal (RFR). RuvA specifically binds to HJ cruciform DNA, conferring on it an open structure. The RuvB hexamer acts as an ATP-dependent pump, pulling dsDNA into and through the RuvAB complex. HJ branch migration allows RuvC to scan DNA until it finds its consensus sequence, where it cleaves and resolves the cruciform DNA. The sequence is that of Holliday junction branch migration complex subunit RuvA from Pectobacterium atrosepticum (strain SCRI 1043 / ATCC BAA-672) (Erwinia carotovora subsp. atroseptica).